A 78-amino-acid polypeptide reads, in one-letter code: Antitoxin VapB1 (78 aa).

Positions 3 to 44 (TKVFQSGNSQAVRIPMDFRFDVDTVEIFRKENGDVVLRPVSK) constitute a SpoVT-AbrB domain.

The protein belongs to the VapB family. As to quaternary structure, forms multimers, as well forming as a complex with VapC1.

Its function is as follows. Antitoxin component of a type II toxin-antitoxin (TA) system. Upon expression in E.coli neutralizes the effect of toxin VapC1. In vitro inhibits the RNase activity of VapC1. The polypeptide is Antitoxin VapB1 (vapB1) (Haemophilus influenzae (strain R2866)).